The following is a 195-amino-acid chain: Peptidyl-tRNA hydrolase (195 aa).

Residue Y18 coordinates tRNA. The active-site Proton acceptor is the H23. Residues F69, N71, and N117 each coordinate tRNA.

This sequence belongs to the PTH family. Monomer.

It is found in the cytoplasm. The catalysed reaction is an N-acyl-L-alpha-aminoacyl-tRNA + H2O = an N-acyl-L-amino acid + a tRNA + H(+). Its function is as follows. Hydrolyzes ribosome-free peptidyl-tRNAs (with 1 or more amino acids incorporated), which drop off the ribosome during protein synthesis, or as a result of ribosome stalling. In terms of biological role, catalyzes the release of premature peptidyl moieties from peptidyl-tRNA molecules trapped in stalled 50S ribosomal subunits, and thus maintains levels of free tRNAs and 50S ribosomes. In Alcanivorax borkumensis (strain ATCC 700651 / DSM 11573 / NCIMB 13689 / SK2), this protein is Peptidyl-tRNA hydrolase.